Consider the following 312-residue polypeptide: Structure-specific endonuclease subunit SLX1 (312 aa).

Residues D9–K92 form the GIY-YIG domain. An SLX1-type zinc finger spans residues C219–C282.

This sequence belongs to the SLX1 family. As to quaternary structure, forms a heterodimer with SLX4. Requires a divalent metal cation as cofactor.

Its subcellular location is the nucleus. Functionally, catalytic subunit of the SLX1-SLX4 structure-specific endonuclease that resolves DNA secondary structures generated during DNA repair and recombination. Has endonuclease activity towards branched DNA substrates, introducing single-strand cuts in duplex DNA close to junctions with ss-DNA. This Candida glabrata (strain ATCC 2001 / BCRC 20586 / JCM 3761 / NBRC 0622 / NRRL Y-65 / CBS 138) (Yeast) protein is Structure-specific endonuclease subunit SLX1.